Reading from the N-terminus, the 376-residue chain is Ribonucleoside-diphosphate reductase subunit beta (376 aa).

D85, E116, and H119 together coordinate Fe cation. The active site involves Y123. E205, E239, and H242 together coordinate Fe cation.

The protein belongs to the ribonucleoside diphosphate reductase small chain family. As to quaternary structure, tetramer of two alpha and two beta subunits. Fe cation serves as cofactor.

It carries out the reaction a 2'-deoxyribonucleoside 5'-diphosphate + [thioredoxin]-disulfide + H2O = a ribonucleoside 5'-diphosphate + [thioredoxin]-dithiol. Functionally, provides the precursors necessary for DNA synthesis. Catalyzes the biosynthesis of deoxyribonucleotides from the corresponding ribonucleotides. This chain is Ribonucleoside-diphosphate reductase subunit beta (nrdB), found in Buchnera aphidicola subsp. Acyrthosiphon pisum (strain APS) (Acyrthosiphon pisum symbiotic bacterium).